Here is a 411-residue protein sequence, read N- to C-terminus: RNA binding protein fox-1 homolog 2 (411 aa).

The tract at residues 16-175 (TRGTKRESDQ…SETKASPKRL (160 aa)) is disordered. 2 stretches are compositionally biased toward polar residues: residues 58–83 (PVSQAYQGFAPLNSQGNQEPTATPDT) and 99–119 (NGLSTDYGSQHTQDYATQSTE). Residues 135 to 165 (SAPATSTANASSTTDGSQTEGQQSQSQNNEN) show a composition bias toward low complexity. The region spanning 173–249 (KRLHVSNIPF…RKIEVNNATA (77 aa)) is the RRM domain.

In terms of assembly, interacts with papd4/gld2.

The protein localises to the nucleus. It localises to the cytoplasm. Functionally, RNA-binding protein that regulates alternative splicing events by binding to 5'-UGCAUGU-3' elements. Regulates alternative splicing of tissue-specific exons. The sequence is that of RNA binding protein fox-1 homolog 2 (rbfox2) from Xenopus laevis (African clawed frog).